A 406-amino-acid chain; its full sequence is S-adenosylmethionine synthase (406 aa).

140 to 145 (GRGSVD) is an ATP binding site.

This sequence belongs to the AdoMet synthase 2 family. Mg(2+) serves as cofactor.

It carries out the reaction L-methionine + ATP + H2O = S-adenosyl-L-methionine + phosphate + diphosphate. It functions in the pathway amino-acid biosynthesis; S-adenosyl-L-methionine biosynthesis; S-adenosyl-L-methionine from L-methionine: step 1/1. Its function is as follows. Catalyzes the formation of S-adenosylmethionine from methionine and ATP. This is S-adenosylmethionine synthase (mat) from Aeropyrum pernix (strain ATCC 700893 / DSM 11879 / JCM 9820 / NBRC 100138 / K1).